A 117-amino-acid polypeptide reads, in one-letter code: Large ribosomal subunit protein bL20 (117 aa).

It belongs to the bacterial ribosomal protein bL20 family.

Binds directly to 23S ribosomal RNA and is necessary for the in vitro assembly process of the 50S ribosomal subunit. It is not involved in the protein synthesizing functions of that subunit. This chain is Large ribosomal subunit protein bL20, found in Thermomicrobium roseum (strain ATCC 27502 / DSM 5159 / P-2).